The primary structure comprises 239 residues: Beta-glucanase (239 aa).

An N-terminal signal peptide occupies residues 1–25 (MKRVLLILVTGLFMSLCGITSSVSA). The 214-residue stretch at 26 to 239 (QTGGSFFEPF…HYDWMRYRKK (214 aa)) folds into the GH16 domain. Cysteines 57 and 86 form a disulfide. E134 (nucleophile) is an active-site residue.

The protein belongs to the glycosyl hydrolase 16 family.

It carries out the reaction Hydrolysis of (1-&gt;4)-beta-D-glucosidic linkages in beta-D-glucans containing (1-&gt;3)- and (1-&gt;4)-bonds.. This Bacillus amyloliquefaciens (Bacillus velezensis) protein is Beta-glucanase (bglA).